A 125-amino-acid chain; its full sequence is Cu-Zn superoxide dismutase-like protein (125 aa).

Cys-52 and Cys-102 form a disulfide bridge.

The protein belongs to the Cu-Zn superoxide dismutase family.

The protein localises to the host cytoplasm. In terms of biological role, virion protein with no enzymatic activity. This Bos taurus (Bovine) protein is Cu-Zn superoxide dismutase-like protein.